A 116-amino-acid polypeptide reads, in one-letter code: NADH-quinone oxidoreductase subunit A (116 aa).

3 helical membrane-spanning segments follow: residues 3 to 23, 61 to 81, and 88 to 108; these read FTLL…VIAL, FAIL…WAVI, and QGLI…AYAW.

The protein belongs to the complex I subunit 3 family. In terms of assembly, NDH-1 is composed of 14 different subunits. Subunits NuoA, H, J, K, L, M, N constitute the membrane sector of the complex.

The protein localises to the cell inner membrane. It catalyses the reaction a quinone + NADH + 5 H(+)(in) = a quinol + NAD(+) + 4 H(+)(out). NDH-1 shuttles electrons from NADH, via FMN and iron-sulfur (Fe-S) centers, to quinones in the respiratory chain. The immediate electron acceptor for the enzyme in this species is believed to be a menaquinone. Couples the redox reaction to proton translocation (for every two electrons transferred, four hydrogen ions are translocated across the cytoplasmic membrane), and thus conserves the redox energy in a proton gradient. This is NADH-quinone oxidoreductase subunit A from Bacteroides fragilis (strain ATCC 25285 / DSM 2151 / CCUG 4856 / JCM 11019 / LMG 10263 / NCTC 9343 / Onslow / VPI 2553 / EN-2).